Consider the following 552-residue polypeptide: Putative transport protein PBPRA2144 (552 aa).

5 helical membrane-spanning segments follow: residues 4 to 24 (IALS…IGNW), 26 to 46 (ICGV…VGHF), 65 to 85 (FGLI…FFAS), 95 to 115 (AFAA…YKIF), and 158 to 178 (MGYA…MWIL). 2 RCK C-terminal domains span residues 188 to 276 (KEAE…VIGE) and 279 to 361 (DASL…IVGN). Transmembrane regions (helical) follow at residues 371 to 391 (MLPV…PFYL), 394 to 414 (FPAA…LILA), 439 to 459 (IVLF…DTLV), 464 to 484 (LSWM…VGFL), 493 to 513 (YLTI…LAFA), and 532 to 552 (PLVM…LWAV).

It belongs to the AAE transporter (TC 2.A.81) family. YidE subfamily.

The protein resides in the cell membrane. This chain is Putative transport protein PBPRA2144, found in Photobacterium profundum (strain SS9).